Here is a 218-residue protein sequence, read N- to C-terminus: Elongation factor Ts (218 aa).

Positions 82–85 (TDFV) are involved in Mg(2+) ion dislocation from EF-Tu.

Belongs to the EF-Ts family.

Its subcellular location is the cytoplasm. In terms of biological role, associates with the EF-Tu.GDP complex and induces the exchange of GDP to GTP. It remains bound to the aminoacyl-tRNA.EF-Tu.GTP complex up to the GTP hydrolysis stage on the ribosome. The polypeptide is Elongation factor Ts (Prochlorococcus marinus (strain NATL1A)).